A 387-amino-acid polypeptide reads, in one-letter code: S-adenosylmethionine synthase (387 aa).

Histidine 16 provides a ligand contact to ATP. Position 18 (aspartate 18) interacts with Mg(2+). Glutamate 44 contributes to the K(+) binding site. Glutamate 57 and glutamine 100 together coordinate L-methionine. Residues 100-110 (QSPDIAQGVDE) form a flexible loop region. Residues 167-169 (DAK), 232-233 (RF), aspartate 241, 247-248 (RK), alanine 264, and lysine 268 each bind ATP. Residue aspartate 241 participates in L-methionine binding. Lysine 272 contacts L-methionine.

The protein belongs to the AdoMet synthase family. In terms of assembly, homotetramer; dimer of dimers. Mg(2+) serves as cofactor. It depends on K(+) as a cofactor.

Its subcellular location is the cytoplasm. It carries out the reaction L-methionine + ATP + H2O = S-adenosyl-L-methionine + phosphate + diphosphate. Its pathway is amino-acid biosynthesis; S-adenosyl-L-methionine biosynthesis; S-adenosyl-L-methionine from L-methionine: step 1/1. In terms of biological role, catalyzes the formation of S-adenosylmethionine (AdoMet) from methionine and ATP. The overall synthetic reaction is composed of two sequential steps, AdoMet formation and the subsequent tripolyphosphate hydrolysis which occurs prior to release of AdoMet from the enzyme. In Janthinobacterium sp. (strain Marseille) (Minibacterium massiliensis), this protein is S-adenosylmethionine synthase.